The sequence spans 49 residues: Large ribosomal subunit protein bL33 (49 aa).

The protein belongs to the bacterial ribosomal protein bL33 family.

The polypeptide is Large ribosomal subunit protein bL33 (Alkaliphilus oremlandii (strain OhILAs) (Clostridium oremlandii (strain OhILAs))).